A 104-amino-acid chain; its full sequence is Cytochrome c-552 (104 aa).

An N-terminal signal peptide occupies residues 1-23 (MHLHLRGICLVLAVASSSSSALA). Heme c contacts are provided by C37, C40, H41, and M82.

Belongs to the cytochrome c family. As to quaternary structure, monoheme monomer. Has the tendency to dimerize. In terms of processing, binds 1 heme c group covalently per subunit.

It is found in the periplasm. The chain is Cytochrome c-552 (cycB) from Bradyrhizobium diazoefficiens (strain JCM 10833 / BCRC 13528 / IAM 13628 / NBRC 14792 / USDA 110).